Consider the following 273-residue polypeptide: Suppressor protein STM1 (273 aa).

The tract at residues 1 to 153 (MSNPFDLLGN…PKTAQLSLQD (153 aa)) is disordered. Ser2 carries the post-translational modification N-acetylserine. Residues Ser32, Ser41, and Ser45 each carry the phosphoserine; by MTOR modification. Residue Lys46 forms a Glycyl lysine isopeptide (Lys-Gly) (interchain with G-Cter in ubiquitin) linkage. Residues Ser55 and Ser73 each carry the phosphoserine; by MTOR modification. Ser55 is modified (phosphoserine). 3 stretches are compositionally biased toward basic and acidic residues: residues 60 to 77 (AIRD…KDVT), 89 to 104 (RATD…DTKK), and 111 to 124 (GDDK…KEAQ). A Phosphoserine modification is found at Ser118. Residues Lys121 and Lys171 each participate in a glycyl lysine isopeptide (Lys-Gly) (interchain with G-Cter in ubiquitin) cross-link. Thr181 carries the phosphothreonine; by MTOR modification. A Glycyl lysine isopeptide (Lys-Gly) (interchain with G-Cter in ubiquitin) cross-link involves residue Lys184. Thr218 is modified (phosphothreonine; by MTOR). The segment at 219-273 (RKNFGDRNNNSRNNFNNRRGGRGARKGNNTANATNSANTVQKNRNIDVSNLPSLA) is disordered. 2 stretches are compositionally biased toward low complexity: residues 224–236 (DRNN…FNNR) and 244–257 (KGNN…SANT). Ser229 is subject to Phosphoserine. Positions 258-273 (VQKNRNIDVSNLPSLA) are enriched in polar residues.

The protein belongs to the SERBP1-HABP4 family. Associates with mature 80S ribosomes. Binds to the head domain of the 40S ribosomal subunit and prevents mRNA binding by inserting its alpha-helix domain towards the mRNA entry tunnel at the decoding site, where it blocks the binding of tRNA and mRNA at the A- and P-sites. Interacts with EFT1; interaction sequesters EFT1 at the A-site of the ribosome, thereby blocking the interaction sites of the mRNA-tRNA complex, promoting ribosome stabilization and hibernation. Interacts with CDC13. Associates with the telomere-proximal Y' element. Post-translationally, phosphorylation by TORC1 upon nutrient replenishment inhibits STM1 and causes its release from dormant ribosomes.

The protein localises to the cytoplasm. It localises to the nucleus. Its subcellular location is the perinuclear region. Functionally, ribosome preservation factor that protect a small pool of nontranslating, vacant ribosomes in cells under nutrient starvation conditions. Under nutrient-limiting conditions, cells reduce ribosome biogenesis and degrade ribosomes via autophagy (ribophagy) or proteasomal degradation. To avoid excessive degradation during starvation, STM1 binds to and protects 80S ribosomes from proteasomal degradation. Under nutrient-sufficient conditions, TORC1 phosphorylates and inhibits STM1 to prevent formation of dormant 80S ribosomes. Acts as an inhibitor of mRNA translation by promoting ribosome hibernation: clamps the two ribosomal subunits, thereby preventing their dissociation, and inhibits translation by excluding mRNA-binding. Acts via its association with eEF2 (EFT1), promoting ribosome stabilization and storage in an inactive state. May also repress translation by preventing association of eEF3 (YEF3 and HEF3) with ribosomes. Binds specifically G4 quadruplex (these are four-stranded right-handed helices, stabilized by guanine base quartets) and purine motif triplex (characterized by a third, antiparallel purine-rich DNA strand located within the major groove of a homopurine stretch of duplex DNA) nucleic acid structures. These structures may be present at telomeres or in rRNAs. Acts with CDC13 to control telomere length homeostasis. Involved in the control of the apoptosis-like cell death. This is Suppressor protein STM1 from Saccharomyces cerevisiae (strain ATCC 204508 / S288c) (Baker's yeast).